A 384-amino-acid polypeptide reads, in one-letter code: N-acetyldiaminopimelate deacetylase (384 aa).

Asp-75 is a catalytic residue. The active-site Proton acceptor is Glu-134.

This sequence belongs to the peptidase M20A family. N-acetyldiaminopimelate deacetylase subfamily.

The catalysed reaction is N-acetyl-(2S,6S)-2,6-diaminopimelate + H2O = (2S,6S)-2,6-diaminopimelate + acetate. Its pathway is amino-acid biosynthesis; L-lysine biosynthesis via DAP pathway; LL-2,6-diaminopimelate from (S)-tetrahydrodipicolinate (acetylase route): step 3/3. Functionally, catalyzes the conversion of N-acetyl-diaminopimelate to diaminopimelate and acetate. The polypeptide is N-acetyldiaminopimelate deacetylase (Lactobacillus helveticus (strain DPC 4571)).